The primary structure comprises 545 residues: Chaperonin GroEL 2 (545 aa).

ATP contacts are provided by residues 29–32, 86–90, Gly413, 479–481, and Asp495; these read TLGP, DGTTT, and NAA.

This sequence belongs to the chaperonin (HSP60) family. In terms of assembly, forms a cylinder of 14 subunits composed of two heptameric rings stacked back-to-back. Interacts with the co-chaperonin GroES.

The protein resides in the cytoplasm. It carries out the reaction ATP + H2O + a folded polypeptide = ADP + phosphate + an unfolded polypeptide.. Functionally, together with its co-chaperonin GroES, plays an essential role in assisting protein folding. The GroEL-GroES system forms a nano-cage that allows encapsulation of the non-native substrate proteins and provides a physical environment optimized to promote and accelerate protein folding. In Prochlorococcus marinus (strain MIT 9215), this protein is Chaperonin GroEL 2.